Here is a 768-residue protein sequence, read N- to C-terminus: uncharacterized protein (768 aa).

It to E.coli YkiA.

This is an uncharacterized protein from Escherichia coli (strain K12).